The sequence spans 98 residues: NADH-ubiquinone oxidoreductase chain 4L (98 aa).

The next 3 membrane-spanning stretches (helical) occupy residues 1–21 (MPIIYMNIMLAFLISLLGMLF), 29–49 (SLLCLEGMMLSLFIMSTLMAL), and 58–78 (IVPIALLVFAACEAAVGLALL).

The protein belongs to the complex I subunit 4L family. In terms of assembly, core subunit of respiratory chain NADH dehydrogenase (Complex I) which is composed of 45 different subunits.

It is found in the mitochondrion inner membrane. It carries out the reaction a ubiquinone + NADH + 5 H(+)(in) = a ubiquinol + NAD(+) + 4 H(+)(out). In terms of biological role, core subunit of the mitochondrial membrane respiratory chain NADH dehydrogenase (Complex I) which catalyzes electron transfer from NADH through the respiratory chain, using ubiquinone as an electron acceptor. Part of the enzyme membrane arm which is embedded in the lipid bilayer and involved in proton translocation. The protein is NADH-ubiquinone oxidoreductase chain 4L (MT-ND4L) of Trachypithecus obscurus (Dusky leaf-monkey).